A 175-amino-acid polypeptide reads, in one-letter code: Crossover junction endodeoxyribonuclease RuvC (175 aa).

Active-site residues include Asp16, Glu76, and Asp148. Mg(2+)-binding residues include Asp16, Glu76, and Asp148.

Belongs to the RuvC family. Homodimer which binds Holliday junction (HJ) DNA. The HJ becomes 2-fold symmetrical on binding to RuvC with unstacked arms; it has a different conformation from HJ DNA in complex with RuvA. In the full resolvosome a probable DNA-RuvA(4)-RuvB(12)-RuvC(2) complex forms which resolves the HJ. The cofactor is Mg(2+).

The protein resides in the cytoplasm. It catalyses the reaction Endonucleolytic cleavage at a junction such as a reciprocal single-stranded crossover between two homologous DNA duplexes (Holliday junction).. Functionally, the RuvA-RuvB-RuvC complex processes Holliday junction (HJ) DNA during genetic recombination and DNA repair. Endonuclease that resolves HJ intermediates. Cleaves cruciform DNA by making single-stranded nicks across the HJ at symmetrical positions within the homologous arms, yielding a 5'-phosphate and a 3'-hydroxyl group; requires a central core of homology in the junction. The consensus cleavage sequence is 5'-(A/T)TT(C/G)-3'. Cleavage occurs on the 3'-side of the TT dinucleotide at the point of strand exchange. HJ branch migration catalyzed by RuvA-RuvB allows RuvC to scan DNA until it finds its consensus sequence, where it cleaves and resolves the cruciform DNA. This Bradyrhizobium sp. (strain ORS 278) protein is Crossover junction endodeoxyribonuclease RuvC.